Consider the following 103-residue polypeptide: Small ribosomal subunit protein uS10 (103 aa).

Belongs to the universal ribosomal protein uS10 family. As to quaternary structure, part of the 30S ribosomal subunit.

Involved in the binding of tRNA to the ribosomes. The chain is Small ribosomal subunit protein uS10 from Campylobacter jejuni subsp. jejuni serotype O:6 (strain 81116 / NCTC 11828).